The chain runs to 141 residues: Nucleoside diphosphate kinase (141 aa).

6 residues coordinate ATP: Lys11, Phe59, Arg87, Thr93, Arg104, and Asn114. Catalysis depends on His117, which acts as the Pros-phosphohistidine intermediate.

The protein belongs to the NDK family. As to quaternary structure, homotetramer. Mg(2+) is required as a cofactor.

Its subcellular location is the cytoplasm. It carries out the reaction a 2'-deoxyribonucleoside 5'-diphosphate + ATP = a 2'-deoxyribonucleoside 5'-triphosphate + ADP. The enzyme catalyses a ribonucleoside 5'-diphosphate + ATP = a ribonucleoside 5'-triphosphate + ADP. Its function is as follows. Major role in the synthesis of nucleoside triphosphates other than ATP. The ATP gamma phosphate is transferred to the NDP beta phosphate via a ping-pong mechanism, using a phosphorylated active-site intermediate. The protein is Nucleoside diphosphate kinase of Pseudomonas fluorescens (strain SBW25).